A 518-amino-acid polypeptide reads, in one-letter code: uncharacterized protein (518 aa).

14 helical membrane passes run 13-33 (WAIS…GIIS), 49-69 (WGSW…PIVG), 86-106 (CLFG…LFLI), 109-129 (LIQA…ILAT), 141-161 (LLGA…SFLL), 169-189 (WLFL…ACFI), 202-222 (AAGI…MTNL), 231-251 (LGNP…AALI), 280-300 (LIIG…PSYV), 312-332 (GYWM…GGAL), 341-361 (TVIL…LWVT), 365-385 (EFVI…GAPL), 410-430 (IGLT…FDQI), and 493-513 (LYAA…IPAF).

Belongs to the major facilitator superfamily. TCR/Tet family.

It localises to the cell membrane. This is an uncharacterized protein from Bacillus subtilis (strain 168).